The following is a 1888-amino-acid chain: Fatty acid synthase subunit alpha (1888 aa).

Residues 98–118 are disordered; it reads DLAPVEEPNAEEQTGAAATPA. A Carrier domain is found at 146–221; sequence VKASLLLHVL…ETFQDTFAGS (76 aa). Position 181 is an O-(pantetheine 4'-phosphoryl)serine (Ser181). The beta-ketoacyl reductase stretch occupies residues 675-874; it reads DKYVLITGAG…CGAIIGWTRG (200 aa). The Ketosynthase family 3 (KS3) domain occupies 1119–1657; the sequence is KQMIQEVVIE…QKGAQAVAVH (539 aa). Active-site for beta-ketoacyl synthase activity residues include Cys1305, His1542, and His1583. Residues Asp1774, Val1775, and Glu1776 each contribute to the Mg(2+) site. Acetyl-CoA contacts are provided by residues 1774–1776, Tyr1800, Ser1810, 1819–1829, 1843–1846, and 1873–1875; these read DVE, EAVFKSLGVKS, REAG, and ISH. Positions 1874 and 1875 each coordinate Mg(2+).

The protein belongs to the thiolase-like superfamily. Fungal fatty acid synthetase subunit alpha family. Fatty acid synthase is composed of alpha and beta subunits.

It catalyses the reaction acetyl-CoA + n malonyl-CoA + 2n NADPH + 4n H(+) = a long-chain-acyl-CoA + n CoA + n CO2 + 2n NADP(+).. The enzyme catalyses a fatty acyl-[ACP] + malonyl-[ACP] + H(+) = a 3-oxoacyl-[ACP] + holo-[ACP] + CO2. It carries out the reaction a (3R)-hydroxyacyl-[ACP] + NADP(+) = a 3-oxoacyl-[ACP] + NADPH + H(+). Fatty acid synthetase catalyzes the formation of long-chain fatty acids from acetyl-CoA, malonyl-CoA and NADPH. The alpha subunit contains domains for: acyl carrier protein, 3-oxoacyl-[acyl-carrier-protein] reductase, and 3-oxoacyl-[acyl-carrier-protein] synthase. In this species, higher amounts of C18 than C16 fatty acids are produced. The protein is Fatty acid synthase subunit alpha (FAS2) of Lachancea kluyveri (Yeast).